The sequence spans 37 residues: Cytochrome b6-f complex subunit 5 (37 aa).

A helical transmembrane segment spans residues 5-25; it reads FLFGIVLGLIPITLAGLFVTA.

This sequence belongs to the PetG family. As to quaternary structure, the 4 large subunits of the cytochrome b6-f complex are cytochrome b6, subunit IV (17 kDa polypeptide, PetD), cytochrome f and the Rieske protein, while the 4 small subunits are PetG, PetL, PetM and PetN. The complex functions as a dimer.

The protein resides in the plastid. It localises to the chloroplast thylakoid membrane. Its function is as follows. Component of the cytochrome b6-f complex, which mediates electron transfer between photosystem II (PSII) and photosystem I (PSI), cyclic electron flow around PSI, and state transitions. PetG is required for either the stability or assembly of the cytochrome b6-f complex. This chain is Cytochrome b6-f complex subunit 5, found in Platanus occidentalis (Sycamore).